The sequence spans 748 residues: Acetyl-CoA decarbonylase/synthase complex subunit beta 1 (748 aa).

The [Ni-Fe-S] cluster site is built by cysteine 480, cysteine 483, cysteine 569, and cysteine 571.

The protein belongs to the CdhC family. As to quaternary structure, monomer. The ACDS complex is made up of alpha, epsilon, beta, gamma and delta chains with a probable stoichiometry of (alpha(2)epsilon(2))(4)-beta(8)-(gamma(1)delta(1))(8) (Potential). [Ni-Fe-S] cluster serves as cofactor.

The catalysed reaction is Co(I)-[corrinoid Fe-S protein] + acetyl-CoA + H(+) = methyl-Co(III)-[corrinoid Fe-S protein] + CO + CoA. In terms of biological role, part of a complex that catalyzes the reversible cleavage of acetyl-CoA, allowing autotrophic growth from CO(2). The alpha-epsilon complex generates CO from CO(2), while the beta subunit (this protein) combines the CO with CoA and a methyl group to form acetyl-CoA. The methyl group, which is incorporated into acetyl-CoA, is transferred to the beta subunit by a corrinoid iron-sulfur protein (the gamma-delta complex). The chain is Acetyl-CoA decarbonylase/synthase complex subunit beta 1 (cdhC1) from Methanocaldococcus jannaschii (strain ATCC 43067 / DSM 2661 / JAL-1 / JCM 10045 / NBRC 100440) (Methanococcus jannaschii).